A 336-amino-acid polypeptide reads, in one-letter code: NADH-cytochrome b5 reductase 2 (336 aa).

Residues 28 to 50 (GGSSNGALYVGIGAAGLAGAYIY) traverse the membrane as a helical segment. The FAD-binding FR-type domain maps to 84 to 189 (QGFISLLLDK…KGPIPKYPWS (106 aa)). 192-227 (KHEHIALIAGGTGITPMWQTARAIFKNPEDKTKVTL) is an FAD binding site.

Belongs to the flavoprotein pyridine nucleotide cytochrome reductase family. Requires FAD as cofactor.

It localises to the mitochondrion outer membrane. It catalyses the reaction 2 Fe(III)-[cytochrome b5] + NADH = 2 Fe(II)-[cytochrome b5] + NAD(+) + H(+). In terms of biological role, may mediate the reduction of outer membrane cytochrome b5. The protein is NADH-cytochrome b5 reductase 2 (MCR1) of Phaeosphaeria nodorum (strain SN15 / ATCC MYA-4574 / FGSC 10173) (Glume blotch fungus).